Consider the following 257-residue polypeptide: Ribosome-inactivating protein charybdin (257 aa).

The active site involves Glu167. Cysteines 217 and 254 form a disulfide.

Belongs to the ribosome-inactivating protein family. Type 1 RIP subfamily.

It catalyses the reaction Endohydrolysis of the N-glycosidic bond at one specific adenosine on the 28S rRNA.. In terms of biological role, inhibits translation in rabbit reticulocytes. The chain is Ribosome-inactivating protein charybdin from Drimia maritima (Sea squill).